A 188-amino-acid chain; its full sequence is MKVAASSLRKGFVVDMDGKLYVVLNVENIHPGKGTPVTQLNMRRISDGVKVSERYRTTETVERAFVDQRDHTFLYQDGEGYHFMNPESFDQLVASPEVIGDLGAYLAEGMVVQLSTHNDLPIALELPRTVTLEIVETEPSVKGQTASSSYKPAILSNGVRTMVPPYIAAGTRVIILTEDGSYQERAKD.

It belongs to the elongation factor P family.

The protein localises to the cytoplasm. It functions in the pathway protein biosynthesis; polypeptide chain elongation. In terms of biological role, involved in peptide bond synthesis. Stimulates efficient translation and peptide-bond synthesis on native or reconstituted 70S ribosomes in vitro. Probably functions indirectly by altering the affinity of the ribosome for aminoacyl-tRNA, thus increasing their reactivity as acceptors for peptidyl transferase. The polypeptide is Elongation factor P (Caulobacter sp. (strain K31)).